We begin with the raw amino-acid sequence, 476 residues long: MANRFLRPNLIHRFSTVSPVGPPTTIIPEILSFDQPKPEVDLDLSDQARLFASVPISTLLRSTAILHATSIGPMVDLGSWLMSSKLMDTTVTRDLVLRIVKGTFYDHFCAGEDAAAAARRVSSVYESTGLKGMLVYGVEHAEDGGACDENIQKFIETVEAAKTLPSSHLSSVVVKITAICPMNVLKRVSDLLRWQYKNPNFKLPWKLNSFPVFSGLSPLYHTTSEPEPLTVEEERELEKAHERLKSVCLRCQESNVPLLIDAEDTILQPAIDYMAYWSAIMFNSDKDRPIVYNTIQAYLKDAGERLHLALRESEKMNVPIGFKLVRGAYMSSEAKLADSLGYKSPVHDTIQNTHDCYNDCMSFLMEKASNGSGIAVILATHNTDSGKLGARKASELGINKENGKIEFAQLYGMSDALSFGLKRAGFNVSKYMPYGPVDTAIPYLIRRAYENRGMMSTGALDRQLMRKELKRRVMAW.

A mitochondrion-targeting transit peptide spans 1–29; it reads MANRFLRPNLIHRFSTVSPVGPPTTIIPE.

Belongs to the proline oxidase family. FAD serves as cofactor. Expressed in the vascular tissue and in the abscission zone of petals, sepals, stamina, pistils and siliques. Not detected in petioles.

Its subcellular location is the mitochondrion. The catalysed reaction is L-proline + a quinone = (S)-1-pyrroline-5-carboxylate + a quinol + H(+). It participates in amino-acid degradation; L-proline degradation into L-glutamate; L-glutamate from L-proline: step 1/2. In terms of biological role, converts proline to delta-1-pyrroline-5-carboxylate. The chain is Proline dehydrogenase 2, mitochondrial (POX2) from Arabidopsis thaliana (Mouse-ear cress).